The sequence spans 453 residues: Probable acetylornithine aminotransferase, mitochondrial (453 aa).

Residue Lys302 is modified to N6-(pyridoxal phosphate)lysine.

This sequence belongs to the class-III pyridoxal-phosphate-dependent aminotransferase family. Pyridoxal 5'-phosphate is required as a cofactor.

The protein localises to the mitochondrion matrix. It carries out the reaction N(2)-acetyl-L-ornithine + 2-oxoglutarate = N-acetyl-L-glutamate 5-semialdehyde + L-glutamate. It participates in amino-acid biosynthesis; L-arginine biosynthesis; N(2)-acetyl-L-ornithine from L-glutamate: step 4/4. The chain is Probable acetylornithine aminotransferase, mitochondrial (argD) from Dictyostelium discoideum (Social amoeba).